We begin with the raw amino-acid sequence, 439 residues long: MSVPSSLMKQPPIQSTAGAVPVRNEKGEISMEKVKVKRYVSGKRPDYAPMESSDEEDEEFQFIKKAKEQEAEPEEQEEDSSSDPRLRRLQNRISEDVEERLARHRKIVEPEVVGESDSEVEGDPWRMEREDSSEEEEEEIDEEEIERRRGMMRQRAQERKNEELEVMEVEDEGRSGEESESESEYEEYTDSEDEMEPRLKPVFIRKKDRVTVQEREAEALKQKELEQEAKHMAEERRKYTLKIVEEETKKELEENKRSLAALDALNTDDENDEEEYEAWKVRELKRIKRDREDREALEKEKAEIERMRNLTEEERRAELRANGKVITNKAVKGKYKFLQKYYHRGAFFMDEDEEVYKRDFSAPTLEDHFNKTILPKVMQVKNFGRSGRTKYTHLVDQDTTSFDSAWGQESAQNTKFFKQKAAGVRDVFERPSAKKRKTT.

The segment covering 1-17 (MSVPSSLMKQPPIQSTA) has biased composition (polar residues). Residues 1 to 200 (MSVPSSLMKQ…SEDEMEPRLK (200 aa)) are disordered. The residue at position 2 (serine 2) is an N-acetylserine. Positions 23–34 (RNEKGEISMEKV) are enriched in basic and acidic residues. A phosphoserine mark is found at serine 52 and serine 53. Residues 61-70 (QFIKKAKEQE) show a composition bias toward basic and acidic residues. Residue lysine 67 forms a Glycyl lysine isopeptide (Lys-Gly) (interchain with G-Cter in SUMO2) linkage. Acidic residues predominate over residues 71 to 81 (AEPEEQEEDSS). Phosphoserine is present on residues serine 94, serine 116, serine 118, serine 132, and serine 133. 2 stretches are compositionally biased toward acidic residues: residues 112–122 (VVGESDSEVEG) and 131–144 (DSSEEEEEEIDEEE). Positions 145 to 163 (IERRRGMMRQRAQERKNEE) are enriched in basic and acidic residues. Residues 178–195 (ESESESEYEEYTDSEDEM) show a composition bias toward acidic residues. A Glycyl lysine isopeptide (Lys-Gly) (interchain with G-Cter in SUMO2) cross-link involves residue lysine 249. Threonine 267 bears the Phosphothreonine mark. A Glycyl lysine isopeptide (Lys-Gly) (interchain with G-Cter in SUMO2) cross-link involves residue lysine 357. Serine 361 is modified (phosphoserine). Residues lysine 371, lysine 381, lysine 415, and lysine 418 each participate in a glycyl lysine isopeptide (Lys-Gly) (interchain with G-Cter in SUMO2) cross-link. Serine 432 is subject to Phosphoserine.

This sequence belongs to the MFAP1 family. As to quaternary structure, component of the spliceosome B complex. Interacts with PRPF38A (via N-terminal interaction domain).

It is found in the nucleus. Functionally, involved in pre-mRNA splicing as a component of the spliceosome. In Bos taurus (Bovine), this protein is Microfibrillar-associated protein 1.